The chain runs to 422 residues: Serine--tRNA ligase (422 aa).

229–231 (TAE) is an L-serine binding site. 260–262 (RKE) contacts ATP. Residue glutamate 283 coordinates L-serine. 347–350 (EISS) lines the ATP pocket. Serine 383 contributes to the L-serine binding site.

This sequence belongs to the class-II aminoacyl-tRNA synthetase family. Type-1 seryl-tRNA synthetase subfamily. In terms of assembly, homodimer. The tRNA molecule binds across the dimer.

It is found in the cytoplasm. It catalyses the reaction tRNA(Ser) + L-serine + ATP = L-seryl-tRNA(Ser) + AMP + diphosphate + H(+). The enzyme catalyses tRNA(Sec) + L-serine + ATP = L-seryl-tRNA(Sec) + AMP + diphosphate + H(+). It participates in aminoacyl-tRNA biosynthesis; selenocysteinyl-tRNA(Sec) biosynthesis; L-seryl-tRNA(Sec) from L-serine and tRNA(Sec): step 1/1. Its function is as follows. Catalyzes the attachment of serine to tRNA(Ser). Is also able to aminoacylate tRNA(Sec) with serine, to form the misacylated tRNA L-seryl-tRNA(Sec), which will be further converted into selenocysteinyl-tRNA(Sec). This is Serine--tRNA ligase from Geobacter sp. (strain M21).